A 269-amino-acid polypeptide reads, in one-letter code: Protein MGF 110-1L (269 aa).

Residues 1–26 (MLGLQIFTLLSIPTLLYTYELELLDL) form the signal peptide. The A repeat unit spans residues 1-145 (MLGLQIFTLL…YVRKRSLQTV (145 aa)). Over 27 to 116 (TRTPPEKELE…HEWHEAVIRK (90 aa)) the chain is Extracellular. Residue Asn-75 is glycosylated (N-linked (GlcNAc...) asparagine; by host). Residues 117–137 (WQKLLTYGFYLVGCVLVANYV) traverse the membrane as a helical segment. Topologically, residues 138–144 (RKRSLQT) are cytoplasmic. Residues 145 to 165 (VMYLLVLLVIFFLLSQLMLYR) traverse the membrane as a helical segment. Residues 147–269 (YLLVLLVIFF…DNLMKKQDIM (123 aa)) form a B repeat. The Extracellular portion of the chain corresponds to 166–269 (ELEDKKHKIG…DNLMKKQDIM (104 aa)).

This sequence belongs to the asfivirus MGF 110 family.

The protein resides in the host membrane. Functionally, plays a role in virus cell tropism, and may be required for efficient virus replication in macrophages. This African swine fever virus (isolate Warthog/Namibia/Wart80/1980) (ASFV) protein is Protein MGF 110-1L.